Consider the following 454-residue polypeptide: Serine/threonine-protein phosphatase C23G10.1 (454 aa).

Positions 196, 198, 224, and 256 each coordinate Mn(2+). The Proton donor role is filled by His257. His308 and His382 together coordinate Mn(2+).

It belongs to the PPP phosphatase family. PP-1 subfamily. Mn(2+) serves as cofactor.

The enzyme catalyses O-phospho-L-seryl-[protein] + H2O = L-seryl-[protein] + phosphate. It catalyses the reaction O-phospho-L-threonyl-[protein] + H2O = L-threonyl-[protein] + phosphate. This is Serine/threonine-protein phosphatase C23G10.1 from Caenorhabditis elegans.